A 155-amino-acid chain; its full sequence is Cytochrome P450 (155 aa).

Heme is bound at residue Cys-99.

Belongs to the cytochrome P450 family. Heme serves as cofactor.

The chain is Cytochrome P450 from Helianthus annuus (Common sunflower).